The following is an 839-amino-acid chain: Taste receptor type 1 member 2 (839 aa).

The N-terminal stretch at 1–19 is a signal peptide; that stretch reads MRPRATTICSLFFLLRVLA. The Extracellular segment spans residues 20-566; that stretch reads EPAKNSDFYL…AFLEWHEAPT (547 aa). N-linked (GlcNAc...) asparagine glycans are attached at residues Asn-84, Asn-127, Asn-248, Asn-292, Asn-312, Asn-368, Asn-428, Asn-487, and Asn-527. Residues 567-587 traverse the membrane as a helical segment; it reads IVVALLAALGFLSTLAILVIF. Topologically, residues 588 to 602 are cytoplasmic; it reads WRHFQTPMVRSAGGP. A helical membrane pass occupies residues 603-623; it reads MCFLMLTLLLVAYMVVPVYVG. Residues 624–635 lie on the Extracellular side of the membrane; that stretch reads PPKVSTCFCRQA. Residues 636-656 form a helical membrane-spanning segment; it reads LFPLCFTICISCIAVRSFQIV. Topologically, residues 657-681 are cytoplasmic; it reads CVFKMASRFPRAYSYWVRYQGPYVS. Residues 682–702 form a helical membrane-spanning segment; sequence MAFITVLKMVTVVIGMLATGL. Residues 703-727 lie on the Extracellular side of the membrane; sequence NPTTRIDPDDPKIMIVSCNPNYRNS. A helical membrane pass occupies residues 728–748; that stretch reads LFFNTGLDLLLSVVGFSFAYM. The Cytoplasmic portion of the chain corresponds to 749-760; sequence GKELPTNYNEAK. The chain crosses the membrane as a helical span at residues 761–781; that stretch reads FITLSMTFYFTSSVSLCTFMS. Residues 782–784 are Extracellular-facing; that stretch reads AYN. Residues 785–805 traverse the membrane as a helical segment; the sequence is GVLVTIMDLLVTVLNLLAISL. The Cytoplasmic segment spans residues 806–839; it reads GYFGPKCYMILFYPERNTPAYFNSMIQGYTMRRD.

It belongs to the G-protein coupled receptor 3 family. TAS1R subfamily. In terms of assembly, forms heterodimers with TAS1R3.

Its subcellular location is the cell membrane. Functionally, putative taste receptor. TAS1R2/TAS1R3 recognizes diverse natural and synthetic sweeteners. The protein is Taste receptor type 1 member 2 (TAS1R2) of Macaca mulatta (Rhesus macaque).